The following is a 436-amino-acid chain: GTPase Der (436 aa).

EngA-type G domains lie at Pro4–Pro167 and Val176–Ser351. GTP is bound by residues Gly10–Ser17, Asp57–Ile61, Asn119–Asp122, Gly182–Ser189, Asp229–Met233, and Asn294–Asp297. Residues Met352–Lys436 form the KH-like domain.

It belongs to the TRAFAC class TrmE-Era-EngA-EngB-Septin-like GTPase superfamily. EngA (Der) GTPase family. In terms of assembly, associates with the 50S ribosomal subunit.

In terms of biological role, GTPase that plays an essential role in the late steps of ribosome biogenesis. The protein is GTPase Der of Bacillus licheniformis (strain ATCC 14580 / DSM 13 / JCM 2505 / CCUG 7422 / NBRC 12200 / NCIMB 9375 / NCTC 10341 / NRRL NRS-1264 / Gibson 46).